Consider the following 628-residue polypeptide: Very-long-chain aldehyde decarbonylase GL1-2 (628 aa).

Transmembrane regions (helical) follow at residues 37-57, 131-151, 191-211, 299-319, and 331-351; these read GAAPVGSWWLHLLLLFAARGL, GWAIALLLHVLVAEPLFYWAH, VVIGVPLAGAFLMGVGSVGLV, DFVFLAHVVDIMASMHVPFVL, and FVLLPFWPVAFGFMLLMWCCS. Positions 137–277 constitute a Fatty acid hydroxylase domain; the sequence is LLHVLVAEPL…MPIFDLLGGT (141 aa).

This sequence belongs to the sterol desaturase family. As to quaternary structure, homodimer. In terms of tissue distribution, expressed in germinating seeds, radicals and leaves.

It localises to the endoplasmic reticulum membrane. It carries out the reaction a long-chain fatty aldehyde + 2 NADPH + O2 + H(+) = a long-chain alkane + formate + 2 NADP(+) + H2O. Functionally, aldehyde decarbonylase involved in the conversion of aldehydes to alkanes. Core component of a very-long-chain alkane synthesis complex. Required for the formation of wax layers conferring cuticular permeability and drought tolerance. This chain is Very-long-chain aldehyde decarbonylase GL1-2, found in Oryza sativa subsp. japonica (Rice).